The sequence spans 952 residues: Calsyntenin-1 (952 aa).

An N-terminal signal peptide occupies residues 1–28 (MLRRPAPALARAVRLLLAGLLYGGGVWA). The Extracellular portion of the chain corresponds to 29–830 (ARVNKHKPWL…PHPFAVVPST (802 aa)). 2 Cadherin domains span residues 38–154 (LEPT…APVF) and 155–255 (KEKS…SPGW). Asparagine 356 carries an N-linked (GlcNAc...) asparagine glycan. Residues 831–851 (ATVVIVVCVSFLVFMIILGVF) form a helical membrane-spanning segment. Residues 852-952 (RIRAAHQRTM…LEWDYSTLSY (101 aa)) lie on the Cytoplasmic side of the membrane. Residues 886-952 (METYEDQHSS…LEWDYSTLSY (67 aa)) form a disordered region. Over residues 896–930 (EEEEEEEEEEESEDGEEEEDITSAESESSEEEEGG) the composition is skewed to acidic residues. A compositionally biased stretch (polar residues) spans 934-952 (GQNTTRQQQLEWDYSTLSY).

This sequence belongs to the calsyntenin family. Directly interacts with APBA2. Forms a tripartite complex with APBA2 and APP. Interacts with KLC1. In terms of assembly, interacts with APBB1; this interaction stabilizes AlcICD metabolism. As to quaternary structure, interacts with PSEN1. In terms of processing, proteolytically processed under normal cellular conditions. A primary zeta-cleavage generates a large extracellular (soluble) N-terminal domain (sAlc) and a short C-terminal transmembrane fragment (CTF1). A secondary cleavage catalyzed by presenilin gamma-secretase within the transmembrane domain releases the beta-Alc-alpha chain in the extracellular milieu and produces an intracellular fragment (AlcICD). This processing is strongly suppressed in the tripartite complex formed with APBA2 and APP, which seems to prevent the association with PSEN1. As to expression, preferentially expressed in the retina and brain.

Its subcellular location is the postsynaptic cell membrane. It localises to the endoplasmic reticulum membrane. The protein localises to the golgi apparatus membrane. It is found in the cell projection. The protein resides in the neuron projection. Its subcellular location is the nucleus. In terms of biological role, postsynaptic adhesion molecule that binds to presynaptic neurexins to mediate both excitatory and inhibitory synapse formation. Promotes synapse development by acting as a cell adhesion molecule at the postsynaptic membrane, which associates with neurexin-alpha at the presynaptic membrane. Also functions as a cargo in axonal anterograde transport by acting as a molecular adapter that promotes KLC1 association with vesicles. Complex formation with APBA2 and APP, stabilizes APP metabolism and enhances APBA2-mediated suppression of beta-APP40 secretion, due to the retardation of intracellular APP maturation. Its function is as follows. As intracellular fragment AlcICD, suppresses APBB1-dependent transactivation stimulated by APP C-terminal intracellular fragment (AICD), most probably by competing with AICD for APBB1-binding. In complex with APBA2 and C99, a C-terminal APP fragment, abolishes C99 interaction with PSEN1 and thus APP C99 cleavage by gamma-secretase, most probably through stabilization of the direct interaction between APBA2 and APP. The chain is Calsyntenin-1 (Clstn1) from Rattus norvegicus (Rat).